Consider the following 309-residue polypeptide: Protoheme IX farnesyltransferase (309 aa).

The next 9 helical transmembrane spans lie at valine 30–valine 49, isoleucine 53–tyrosine 75, alanine 98–leucine 118, valine 123–leucine 143, isoleucine 151–glycine 171, valine 178–phenylalanine 198, isoleucine 224–alanine 244, valine 247–tryptophan 267, and valine 285–isoleucine 305.

The protein belongs to the UbiA prenyltransferase family. Protoheme IX farnesyltransferase subfamily. As to quaternary structure, interacts with CtaA.

Its subcellular location is the cell inner membrane. The catalysed reaction is heme b + (2E,6E)-farnesyl diphosphate + H2O = Fe(II)-heme o + diphosphate. It participates in porphyrin-containing compound metabolism; heme O biosynthesis; heme O from protoheme: step 1/1. Converts heme B (protoheme IX) to heme O by substitution of the vinyl group on carbon 2 of heme B porphyrin ring with a hydroxyethyl farnesyl side group. The chain is Protoheme IX farnesyltransferase from Jannaschia sp. (strain CCS1).